Reading from the N-terminus, the 786-residue chain is Endonuclease MutS2 (786 aa).

333-340 (GPNTGGKT) contributes to the ATP binding site. The Smr domain occupies 711–786 (LDLRGERYDQ…GSGATIVNFK (76 aa)).

The protein belongs to the DNA mismatch repair MutS family. MutS2 subfamily. As to quaternary structure, homodimer. Binds to stalled ribosomes, contacting rRNA.

In terms of biological role, endonuclease that is involved in the suppression of homologous recombination and thus may have a key role in the control of bacterial genetic diversity. Acts as a ribosome collision sensor, splitting the ribosome into its 2 subunits. Detects stalled/collided 70S ribosomes which it binds and splits by an ATP-hydrolysis driven conformational change. Acts upstream of the ribosome quality control system (RQC), a ribosome-associated complex that mediates the extraction of incompletely synthesized nascent chains from stalled ribosomes and their subsequent degradation. Probably generates substrates for RQC. This chain is Endonuclease MutS2, found in Lacticaseibacillus paracasei (strain ATCC 334 / BCRC 17002 / CCUG 31169 / CIP 107868 / KCTC 3260 / NRRL B-441) (Lactobacillus paracasei).